Here is a 355-residue protein sequence, read N- to C-terminus: MAQPSFFQSPPPTTLAAIAAAANATLVDASRGEQVITGLAALDEAGPMHLAFFDNLKYADQLAMTKAGACLVSPRFEARVPSHVAVVRANQPFRAFVQLARTMHADALRPQSWFGCDGISSQAIIDPSARLEDGVVVEPLAVIGAHVEIGAGTIVGAGAVIGPHVKIGRDCNVGARTVIQCALIGNDVLIHPACAIGQDGYGFIFFGPGGHVKVPQTGRVIIQNHVEIGAGTTIDRGSLRDTVIGEGTKIDNQVQIGHNVTIGRHCLLAAQIGLAGSLTIGDNVALGAKVGINNHLTIGDGAQVTAMSGVKDDIPPNGRWGGFFAKPTKQWFREIVAVERLVRDQTATNKDEGQE.

Residue H258 is the Proton acceptor of the active site.

The protein belongs to the transferase hexapeptide repeat family. LpxD subfamily. As to quaternary structure, homotrimer.

The catalysed reaction is a UDP-3-O-[(3R)-3-hydroxyacyl]-alpha-D-glucosamine + a (3R)-hydroxyacyl-[ACP] = a UDP-2-N,3-O-bis[(3R)-3-hydroxyacyl]-alpha-D-glucosamine + holo-[ACP] + H(+). It functions in the pathway bacterial outer membrane biogenesis; LPS lipid A biosynthesis. Its function is as follows. Catalyzes the N-acylation of UDP-3-O-acylglucosamine using 3-hydroxyacyl-ACP as the acyl donor. Is involved in the biosynthesis of lipid A, a phosphorylated glycolipid that anchors the lipopolysaccharide to the outer membrane of the cell. This is UDP-3-O-acylglucosamine N-acyltransferase from Bradyrhizobium sp. (strain BTAi1 / ATCC BAA-1182).